The chain runs to 387 residues: DNA primase small subunit PriS (387 aa).

Catalysis depends on residues Asp-98, Asp-100, and Asp-289.

The protein belongs to the eukaryotic-type primase small subunit family. As to quaternary structure, heterodimer of a small subunit (PriS) and a large subunit (PriL). The cofactor is Mg(2+). It depends on Mn(2+) as a cofactor.

Its function is as follows. Catalytic subunit of DNA primase, an RNA polymerase that catalyzes the synthesis of short RNA molecules used as primers for DNA polymerase during DNA replication. The small subunit contains the primase catalytic core and has DNA synthesis activity on its own. Binding to the large subunit stabilizes and modulates the activity, increasing the rate of DNA synthesis while decreasing the length of the DNA fragments, and conferring RNA synthesis capability. The DNA polymerase activity may enable DNA primase to also catalyze primer extension after primer synthesis. May also play a role in DNA repair. The protein is DNA primase small subunit PriS of Halorubrum lacusprofundi (strain ATCC 49239 / DSM 5036 / JCM 8891 / ACAM 34).